The following is a 94-amino-acid chain: Aspartyl/glutamyl-tRNA(Asn/Gln) amidotransferase subunit C (94 aa).

Belongs to the GatC family. As to quaternary structure, heterotrimer of A, B and C subunits.

The catalysed reaction is L-glutamyl-tRNA(Gln) + L-glutamine + ATP + H2O = L-glutaminyl-tRNA(Gln) + L-glutamate + ADP + phosphate + H(+). It catalyses the reaction L-aspartyl-tRNA(Asn) + L-glutamine + ATP + H2O = L-asparaginyl-tRNA(Asn) + L-glutamate + ADP + phosphate + 2 H(+). Functionally, allows the formation of correctly charged Asn-tRNA(Asn) or Gln-tRNA(Gln) through the transamidation of misacylated Asp-tRNA(Asn) or Glu-tRNA(Gln) in organisms which lack either or both of asparaginyl-tRNA or glutaminyl-tRNA synthetases. The reaction takes place in the presence of glutamine and ATP through an activated phospho-Asp-tRNA(Asn) or phospho-Glu-tRNA(Gln). This is Aspartyl/glutamyl-tRNA(Asn/Gln) amidotransferase subunit C from Desulfitobacterium hafniense (strain DSM 10664 / DCB-2).